A 99-amino-acid chain; its full sequence is A-type ATP synthase subunit F (99 aa).

Belongs to the V-ATPase F subunit family. As to quaternary structure, has multiple subunits with at least A(3), B(3), C, D, E, F, H, I and proteolipid K(x).

The protein resides in the cell membrane. Functionally, component of the A-type ATP synthase that produces ATP from ADP in the presence of a proton gradient across the membrane. This is A-type ATP synthase subunit F from Methanococcus maripaludis (strain C5 / ATCC BAA-1333).